A 315-amino-acid polypeptide reads, in one-letter code: Ribose-phosphate pyrophosphokinase (315 aa).

ATP contacts are provided by residues 37–39 (DGE) and 96–97 (RQ). Positions 131 and 171 each coordinate Mg(2+). Lysine 195 is a catalytic residue. D-ribose 5-phosphate is bound by residues arginine 197, aspartate 221, and 225 to 229 (DTGGT).

It belongs to the ribose-phosphate pyrophosphokinase family. Class I subfamily. In terms of assembly, homohexamer. Mg(2+) serves as cofactor.

It localises to the cytoplasm. The enzyme catalyses D-ribose 5-phosphate + ATP = 5-phospho-alpha-D-ribose 1-diphosphate + AMP + H(+). Its pathway is metabolic intermediate biosynthesis; 5-phospho-alpha-D-ribose 1-diphosphate biosynthesis; 5-phospho-alpha-D-ribose 1-diphosphate from D-ribose 5-phosphate (route I): step 1/1. In terms of biological role, involved in the biosynthesis of the central metabolite phospho-alpha-D-ribosyl-1-pyrophosphate (PRPP) via the transfer of pyrophosphoryl group from ATP to 1-hydroxyl of ribose-5-phosphate (Rib-5-P). The protein is Ribose-phosphate pyrophosphokinase of Pasteurella multocida (strain Pm70).